The primary structure comprises 165 residues: Cytochrome c-type biogenesis protein CcmE (165 aa).

Topologically, residues 1 to 29 are cytoplasmic; the sequence is MSATAEQNARNPKGKGGFARTVSQRKRKR. Residues 30–50 traverse the membrane as a helical; Signal-anchor for type II membrane protein segment; sequence LFLIGGALAVLAVAVGLMLTA. Topologically, residues 51-165 are periplasmic; sequence FNQDIRFFRT…LKKKGVWEGK (115 aa). Residues His143 and Tyr147 each contribute to the heme site.

Belongs to the CcmE/CycJ family.

The protein localises to the cell inner membrane. Its function is as follows. Heme chaperone required for the biogenesis of c-type cytochromes. Transiently binds heme delivered by CcmC and transfers the heme to apo-cytochromes in a process facilitated by CcmF and CcmH. The sequence is that of Cytochrome c-type biogenesis protein CcmE from Brucella abortus (strain S19).